A 2291-amino-acid chain; its full sequence is Protein Ycf2 B (2291 aa).

1642-1649 (GSIGTGRS) serves as a coordination point for ATP.

It belongs to the Ycf2 family.

The protein resides in the plastid. Its subcellular location is the chloroplast stroma. In terms of biological role, probable ATPase of unknown function. Its presence in a non-photosynthetic plant (Epifagus virginiana) and experiments in tobacco indicate that it has an essential function which is probably not related to photosynthesis. This chain is Protein Ycf2 B (ycf2-B), found in Atropa belladonna (Belladonna).